Here is a 486-residue protein sequence, read N- to C-terminus: Glutamyl-tRNA(Gln) amidotransferase subunit A (486 aa).

Active-site charge relay system residues include K76 and S151. S175 serves as the catalytic Acyl-ester intermediate.

The protein belongs to the amidase family. GatA subfamily. In terms of assembly, heterotrimer of A, B and C subunits.

The enzyme catalyses L-glutamyl-tRNA(Gln) + L-glutamine + ATP + H2O = L-glutaminyl-tRNA(Gln) + L-glutamate + ADP + phosphate + H(+). In terms of biological role, allows the formation of correctly charged Gln-tRNA(Gln) through the transamidation of misacylated Glu-tRNA(Gln) in organisms which lack glutaminyl-tRNA synthetase. The reaction takes place in the presence of glutamine and ATP through an activated gamma-phospho-Glu-tRNA(Gln). The polypeptide is Glutamyl-tRNA(Gln) amidotransferase subunit A (Chromohalobacter salexigens (strain ATCC BAA-138 / DSM 3043 / CIP 106854 / NCIMB 13768 / 1H11)).